The primary structure comprises 451 residues: Glycosyltransferase-like At2g41451 (451 aa).

The signal sequence occupies residues 1-23 (MASSDSSYSRKFLLITFLPLSLA). 5 N-linked (GlcNAc...) asparagine glycosylation sites follow: Asn36, Asn137, Asn168, Asn441, and Asn444. Residues 109-345 (QTLPWIFYHK…TYSKFSDLTS (237 aa)) enclose the GT92 domain.

This sequence belongs to the glycosyltransferase 92 family.

It localises to the secreted. It is found in the cell wall. The protein localises to the cytoplasm. Its subcellular location is the cell membrane. In terms of biological role, involved in the coordination between cell elongation and cellulose synthesis by promoting the expression of genes involved in cell elongation and cellulose synthesis. Acts as a regulator of plasmodesmatal permeability. Maybe a glycosyltransferase. This chain is Glycosyltransferase-like At2g41451, found in Arabidopsis thaliana (Mouse-ear cress).